Consider the following 483-residue polypeptide: Glutamyl-tRNA(Gln) amidotransferase subunit A (483 aa).

Active-site charge relay system residues include K76 and S151. Residue S175 is the Acyl-ester intermediate of the active site.

This sequence belongs to the amidase family. GatA subfamily. In terms of assembly, heterotrimer of A, B and C subunits.

It carries out the reaction L-glutamyl-tRNA(Gln) + L-glutamine + ATP + H2O = L-glutaminyl-tRNA(Gln) + L-glutamate + ADP + phosphate + H(+). Allows the formation of correctly charged Gln-tRNA(Gln) through the transamidation of misacylated Glu-tRNA(Gln) in organisms which lack glutaminyl-tRNA synthetase. The reaction takes place in the presence of glutamine and ATP through an activated gamma-phospho-Glu-tRNA(Gln). The sequence is that of Glutamyl-tRNA(Gln) amidotransferase subunit A from Pseudomonas putida (strain ATCC 700007 / DSM 6899 / JCM 31910 / BCRC 17059 / LMG 24140 / F1).